Reading from the N-terminus, the 211-residue chain is MAPSRNGMILKPHFHKDWQRRVATWFNQPARKIRRRKARQAKARRIAPRPVAGPIRPIVRCPTVRYHKKVRAGRGFSLEELKLAGINKRFARTIGISVDPRRRNKSTESLQANVQRLKEYRSKLILFPRKPSAPKKGDSSPEELKMATQLSGPVMPIRNVFKREKARVISEEEKNFKAFASLRMARANARLFGIRAKRAKEAAEQDVEKKK.

This sequence belongs to the eukaryotic ribosomal protein eL13 family. Component of the 60S large ribosomal subunit (LSU).

It localises to the cytoplasm. Component of the ribosome, a large ribonucleoprotein complex responsible for the synthesis of proteins in the cell. The small ribosomal subunit (SSU) binds messenger RNAs (mRNAs) and translates the encoded message by selecting cognate aminoacyl-transfer RNA (tRNA) molecules. The large subunit (LSU) contains the ribosomal catalytic site termed the peptidyl transferase center (PTC), which catalyzes the formation of peptide bonds, thereby polymerizing the amino acids delivered by tRNAs into a polypeptide chain. The nascent polypeptides leave the ribosome through a tunnel in the LSU and interact with protein factors that function in enzymatic processing, targeting, and the membrane insertion of nascent chains at the exit of the ribosomal tunnel. As part of the LSU, it is probably required for its formation and the maturation of rRNAs. This chain is Large ribosomal subunit protein eL13 (RPL13), found in Gallus gallus (Chicken).